A 294-amino-acid polypeptide reads, in one-letter code: Nucleotide-binding protein Smal_0950 (294 aa).

16–23 (GLSGSGKS) provides a ligand contact to ATP. 69 to 72 (DVRG) contacts GTP.

This sequence belongs to the RapZ-like family.

In terms of biological role, displays ATPase and GTPase activities. The chain is Nucleotide-binding protein Smal_0950 from Stenotrophomonas maltophilia (strain R551-3).